Here is a 607-residue protein sequence, read N- to C-terminus: UvrABC system protein C (607 aa).

Residues 11–89 (CKPGVYRFED…IKEFAPPCNV (79 aa)) enclose the GIY-YIG domain. A UVR domain is found at 201–236 (SSLLESLKKKMLKASKNKEYEEAAILRDKIQAAQTV).

Belongs to the UvrC family. Interacts with UvrB in an incision complex.

It localises to the cytoplasm. Its function is as follows. The UvrABC repair system catalyzes the recognition and processing of DNA lesions. UvrC both incises the 5' and 3' sides of the lesion. The N-terminal half is responsible for the 3' incision and the C-terminal half is responsible for the 5' incision. In Tropheryma whipplei (strain Twist) (Whipple's bacillus), this protein is UvrABC system protein C.